Consider the following 342-residue polypeptide: MPVKFPSLKFEQLKQLVLVAAIAVFCVSCSHVPDLAFNPWQEIALETDSTFADIAFTEDPNHGWLVGTKETIFETTDGGDTWEQKLIDLGEEKASFSAVSFSGNEGWITGKPSILLHTTDGGQTWARIPLSEKLPGAPYSIIALGPQTAEMITDLGAIYKTTNGGKNWKALVEGAVGVARTIQRSTDGRYVAVSARGNFYSTWAPGQTEWTPHNRNSSRRLQTMGYGKDGQLWLLARGGQLQFSTDPDAEEWSDVIAPQDKGSWGLLDLSFRTPEEVWVAGASGNLLMSQDGGQTWAKDTGVEDIPANLYRVVFLSPEKGFVLGQDGILLKYNPSTEVAMVP.

An N-terminal signal peptide occupies residues 1–28 (MPVKFPSLKFEQLKQLVLVAAIAVFCVS). A lipid anchor (N-palmitoyl cysteine) is attached at Cys-29. Cys-29 carries the S-diacylglycerol cysteine lipid modification. An Arg-rich patch motif is present at residues 196–220 (RGNFYSTWAPGQTEWTPHNRNSSRR). A propeptide spanning residues 340–342 (MVP) is cleaved from the precursor.

The protein belongs to the Ycf48 family. Part of early PSII assembly complexes which includes D1 (psbA) and PsbI; not found in mature PSII. By two-hybrid analysis in yeast interacts with precursor and intermediate forms of D1, but less with mature D1. Binds to the lumenal side of PSI and PSII complexes. Coimmunoprecipitates with YidC. Purified chlorophyll- and carotenoid-containing photosystem II (PSII) assembly intermediate complex RCII* (iD1, D1, D2, PsbE, PsbF, PsbI, Ycf39, Ycf48, HliC and HliD). In terms of processing, the last 3 residues are removed in the mature protein.

The protein localises to the cellular thylakoid membrane. Functionally, a factor required for optimal assembly of photosystem II (PSII) which acts in the early stages of PSII assembly. Also plays a role in replacement of photodamaged D1 (psbA). May interact with precursor D1 to prevent its premature processing before association with D2 (psbD). May also play a role in chlorophyll insertion into chlorophyll-binding proteins. Increasing levels of chlorophyll precursors partially suppresses deletion of this protein, supporting the idea that Ycf48 assists YidC in synthesis of chlorophyll-binding proteins. The Ycf39-Hlip complex binds D1 at an early stage of PSII assembly along with Ycf48, ribosomes and ChlG, the last enzyme in chlorophyll biosynthesis; it may be involved in chlorophyll reuse and delivery to D1 in the initial stages of PSII assembly. This is Photosystem II assembly lipoprotein Ycf48 from Synechocystis sp. (strain ATCC 27184 / PCC 6803 / Kazusa).